Reading from the N-terminus, the 388-residue chain is Staphopain A (388 aa).

A signal peptide spans 1–25; sequence MKRNFPKLIALSLIFSLSVTPIANA. Positions 26–214 are excised as a propeptide; that stretch reads ESNSNIKAKD…TSQFKSNNYT (189 aa). Residues cysteine 238, histidine 334, and asparagine 355 contribute to the active site.

Belongs to the peptidase C47 family. In terms of assembly, in the cytoplasm, prematurely activated/folded ScpA forms a stable non-covalent complex with ScpB. Post-translationally, cleavage leads to the activation of ScpA probably by an auto-catalytic manner.

Its subcellular location is the secreted. It carries out the reaction Broad endopeptidase action on proteins including elastin, but rather limited hydrolysis of small-molecule substrates. Assays are conveniently made with hemoglobin, casein or Z-Phe-Arg-NHMec as substrate.. Prematurely activated/folded staphopain A is inhibited by staphostatin A (ScpB), which is probably required to protect staphylococcal cytoplasmic proteins from degradation by ScpA. Cysteine protease that plays an important role in the inhibition of host innate immune response. Cleaves host elastins found in connective tissues, pulmonary surfactant protein A in the lungs, and the chemokine receptor CXCR2 on leukocytes. Proteolytic cleavage of surfactant protein A impairs bacterial phagocytosis by neutrophils while CXCR2 degradation blocks neutrophil activation and chemotaxis. Additionally, promotes vascular leakage by activating the plasma kallikerin/kinin system, resulting in hypotension. This Staphylococcus aureus (strain COL) protein is Staphopain A (sspP).